We begin with the raw amino-acid sequence, 246 residues long: Acetoacetate decarboxylase (246 aa).

Lys-115 serves as the catalytic Schiff-base intermediate with acetoacetate.

The protein belongs to the ADC family.

It catalyses the reaction acetoacetate + H(+) = acetone + CO2. Functionally, catalyzes the conversion of acetoacetate to acetone and carbon dioxide. This is Acetoacetate decarboxylase from Clostridium beijerinckii (strain ATCC 51743 / NCIMB 8052) (Clostridium acetobutylicum).